Reading from the N-terminus, the 379-residue chain is MKILRKNHPLLKIVNHSFIDLPTPPNISSWWNFGSLLGVCLMIQILTGLFLAMHYTSDTTTAFSSVAHICRDVNYGWLIRYLHANGASMFFICLFIHVGRGIYYGSYVLSETWNIGIILFLTTMATAFVGYVLPWGQMSFWGATVITNLLSAIPYVGGTLVEWIWGGFSVDKATLTRFFAFHFILPFIITAFALVHLLFLHETGSNNPSGLNSDSDKIPFHPYYTIKDLLGILLLLLALMILALFFPDVLGDPDNFTPANPLNTPAHIKPEWYFLFAYTILRSIPNKLGGVLALILSILILAAFPLLNTSKQHGLIFRPITQTIYWTLIVNLLVLTWIGGQPVEYPFTTIGQIASITYFTTIIILMPVSNTIENNIIKL.

Helical transmembrane passes span 33–53, 77–98, 113–133, and 178–198; these read FGSL…FLAM, WLIR…FIHV, WNIG…GYVL, and FFAF…VHLL. Positions 83 and 97 each coordinate heme b. 2 residues coordinate heme b: His182 and His196. An a ubiquinone-binding site is contributed by His201. 4 consecutive transmembrane segments (helical) span residues 226-246, 288-308, 320-340, and 347-367; these read IKDL…ALFF, LGGV…PLLN, ITQT…WIGG, and FTTI…ILMP.

It belongs to the cytochrome b family. In terms of assembly, the cytochrome bc1 complex contains 11 subunits: 3 respiratory subunits (MT-CYB, CYC1 and UQCRFS1), 2 core proteins (UQCRC1 and UQCRC2) and 6 low-molecular weight proteins (UQCRH/QCR6, UQCRB/QCR7, UQCRQ/QCR8, UQCR10/QCR9, UQCR11/QCR10 and a cleavage product of UQCRFS1). This cytochrome bc1 complex then forms a dimer. Heme b serves as cofactor.

The protein resides in the mitochondrion inner membrane. Functionally, component of the ubiquinol-cytochrome c reductase complex (complex III or cytochrome b-c1 complex) that is part of the mitochondrial respiratory chain. The b-c1 complex mediates electron transfer from ubiquinol to cytochrome c. Contributes to the generation of a proton gradient across the mitochondrial membrane that is then used for ATP synthesis. In Akodon aerosus (Highland grass mouse), this protein is Cytochrome b (MT-CYB).